The primary structure comprises 151 residues: MPIWVDADACPKVIKEILYRAADREKVVITFVANQRLSIPASPYLRTLQVSAGFDVADNEIVQRANQDDLVITADIPLAAEVIEKGAIALNPRGERYTESTIRERLNIRDFMDTMRASGIQTGGPASLSQRDRQLFANELDKWLLQQKRKK.

This sequence belongs to the UPF0178 family.

This is UPF0178 protein PMI1258 from Proteus mirabilis (strain HI4320).